A 161-amino-acid chain; its full sequence is 6,7-dimethyl-8-ribityllumazine synthase (161 aa).

5-amino-6-(D-ribitylamino)uracil is bound by residues Trp31, Ser63–Glu65, and Val85–Ile87. Gly90–Thr91 contributes to the (2S)-2-hydroxy-3-oxobutyl phosphate binding site. His93 functions as the Proton donor in the catalytic mechanism. Residue Phe118 coordinates 5-amino-6-(D-ribitylamino)uracil. Arg132 provides a ligand contact to (2S)-2-hydroxy-3-oxobutyl phosphate.

Belongs to the DMRL synthase family.

It carries out the reaction (2S)-2-hydroxy-3-oxobutyl phosphate + 5-amino-6-(D-ribitylamino)uracil = 6,7-dimethyl-8-(1-D-ribityl)lumazine + phosphate + 2 H2O + H(+). It participates in cofactor biosynthesis; riboflavin biosynthesis; riboflavin from 2-hydroxy-3-oxobutyl phosphate and 5-amino-6-(D-ribitylamino)uracil: step 1/2. Functionally, catalyzes the formation of 6,7-dimethyl-8-ribityllumazine by condensation of 5-amino-6-(D-ribitylamino)uracil with 3,4-dihydroxy-2-butanone 4-phosphate. This is the penultimate step in the biosynthesis of riboflavin. The sequence is that of 6,7-dimethyl-8-ribityllumazine synthase from Paenarthrobacter aurescens (strain TC1).